A 197-amino-acid chain; its full sequence is CRISPR system CMR subunit Cmr7 1 (197 aa).

It belongs to the CRISPR system Cmr7 family. In terms of assembly, possible homodimer. Part of the CMR ribonucleoprotein complex, consisting of crRNA plus Cmr1/Cmr2/Cmr3/Cmr4/Cmr5/Cmr6 at 1:1 and possibly 3 Cmr7 dimers. A Cmr2/Cmr3/Cmr7 subcomplex without crRNA can also be isolated. It does not cleave target RNA.

It is found in the cytoplasm. CRISPR (clustered regularly interspaced short palindromic repeat) is an adaptive immune system that provides protection against mobile genetic elements (viruses, transposable elements and conjugative plasmids). CRISPR clusters contain spacers, sequences complementary to antecedent mobile elements, and target invading nucleic acids. CRISPR clusters are transcribed and processed into CRISPR RNA (crRNA). The CMR complex degrades RNA complementary to the crRNA (target RNA) within UA dinucleotides, generating 3'-OH and 5'-phosphate ends. Activity is dependent on the 8 nt long 5' tag in the crRNA, an unpaired 3' flag on the target RNA, and is stimulated by ATP. Some cleavage of the guide crRNA can also be observed. The chain is CRISPR system CMR subunit Cmr7 1 (cmr7A) from Saccharolobus solfataricus (strain ATCC 35092 / DSM 1617 / JCM 11322 / P2) (Sulfolobus solfataricus).